Here is a 108-residue protein sequence, read N- to C-terminus: Phosphoribosyl-AMP cyclohydrolase (108 aa).

Mg(2+) is bound at residue D78. C79 provides a ligand contact to Zn(2+). D80 and D82 together coordinate Mg(2+). The Zn(2+) site is built by C95 and C102.

This sequence belongs to the PRA-CH family. In terms of assembly, homodimer. It depends on Mg(2+) as a cofactor. Zn(2+) is required as a cofactor.

The protein resides in the cytoplasm. It carries out the reaction 1-(5-phospho-beta-D-ribosyl)-5'-AMP + H2O = 1-(5-phospho-beta-D-ribosyl)-5-[(5-phospho-beta-D-ribosylamino)methylideneamino]imidazole-4-carboxamide. It participates in amino-acid biosynthesis; L-histidine biosynthesis; L-histidine from 5-phospho-alpha-D-ribose 1-diphosphate: step 3/9. Functionally, catalyzes the hydrolysis of the adenine ring of phosphoribosyl-AMP. This chain is Phosphoribosyl-AMP cyclohydrolase, found in Cenarchaeum symbiosum (strain A).